The primary structure comprises 283 residues: Glutamate racemase (283 aa).

Residues 7 to 8 and 39 to 40 contribute to the substrate site; these read DS and YG. The active-site Proton donor/acceptor is the cysteine 70. 71–72 serves as a coordination point for substrate; it reads NT. Cysteine 206 functions as the Proton donor/acceptor in the catalytic mechanism. 207–208 contributes to the substrate binding site; sequence TH.

This sequence belongs to the aspartate/glutamate racemases family.

It carries out the reaction L-glutamate = D-glutamate. It participates in cell wall biogenesis; peptidoglycan biosynthesis. Its function is as follows. Provides the (R)-glutamate required for cell wall biosynthesis. This is Glutamate racemase from Phenylobacterium zucineum (strain HLK1).